The chain runs to 210 residues: Thiamine-phosphate synthase (210 aa).

Residues 43 to 47 (QLREK) and asparagine 75 each bind 4-amino-2-methyl-5-(diphosphooxymethyl)pyrimidine. 2 residues coordinate Mg(2+): aspartate 76 and aspartate 95. Serine 114 lines the 4-amino-2-methyl-5-(diphosphooxymethyl)pyrimidine pocket. 140 to 142 (TST) lines the 2-[(2R,5Z)-2-carboxy-4-methylthiazol-5(2H)-ylidene]ethyl phosphate pocket. Lysine 143 contributes to the 4-amino-2-methyl-5-(diphosphooxymethyl)pyrimidine binding site. 2-[(2R,5Z)-2-carboxy-4-methylthiazol-5(2H)-ylidene]ethyl phosphate contacts are provided by residues glycine 170 and 190 to 191 (IS).

This sequence belongs to the thiamine-phosphate synthase family. Requires Mg(2+) as cofactor.

It catalyses the reaction 2-[(2R,5Z)-2-carboxy-4-methylthiazol-5(2H)-ylidene]ethyl phosphate + 4-amino-2-methyl-5-(diphosphooxymethyl)pyrimidine + 2 H(+) = thiamine phosphate + CO2 + diphosphate. The catalysed reaction is 2-(2-carboxy-4-methylthiazol-5-yl)ethyl phosphate + 4-amino-2-methyl-5-(diphosphooxymethyl)pyrimidine + 2 H(+) = thiamine phosphate + CO2 + diphosphate. It carries out the reaction 4-methyl-5-(2-phosphooxyethyl)-thiazole + 4-amino-2-methyl-5-(diphosphooxymethyl)pyrimidine + H(+) = thiamine phosphate + diphosphate. The protein operates within cofactor biosynthesis; thiamine diphosphate biosynthesis; thiamine phosphate from 4-amino-2-methyl-5-diphosphomethylpyrimidine and 4-methyl-5-(2-phosphoethyl)-thiazole: step 1/1. In terms of biological role, condenses 4-methyl-5-(beta-hydroxyethyl)thiazole monophosphate (THZ-P) and 2-methyl-4-amino-5-hydroxymethyl pyrimidine pyrophosphate (HMP-PP) to form thiamine monophosphate (TMP). The chain is Thiamine-phosphate synthase from Clostridioides difficile (strain 630) (Peptoclostridium difficile).